The primary structure comprises 293 residues: Ethanolamine ammonia-lyase small subunit (293 aa).

Adenosylcob(III)alamin is bound by residues Val207 and Glu228.

Belongs to the EutC family. The basic unit is a heterodimer which dimerizes to form tetramers. The heterotetramers trimerize; 6 large subunits form a core ring with 6 small subunits projecting outwards. It depends on adenosylcob(III)alamin as a cofactor.

It is found in the bacterial microcompartment. The enzyme catalyses ethanolamine = acetaldehyde + NH4(+). The protein operates within amine and polyamine degradation; ethanolamine degradation. Functionally, catalyzes the deamination of various vicinal amino-alcohols to oxo compounds. Allows this organism to utilize ethanolamine as the sole source of nitrogen and carbon in the presence of external vitamin B12. The protein is Ethanolamine ammonia-lyase small subunit of Listeria monocytogenes serotype 4a (strain HCC23).